The chain runs to 759 residues: Phosphoribosylformylglycinamidine synthase subunit PurL (759 aa).

Residue histidine 61 is part of the active site. ATP-binding residues include tyrosine 64 and lysine 105. Glutamate 107 is a Mg(2+) binding site. Residues 108–111 (SHNH) and arginine 130 each bind substrate. The active-site Proton acceptor is histidine 109. Position 131 (aspartate 131) interacts with Mg(2+). Glutamine 260 is a substrate binding site. Position 288 (aspartate 288) interacts with Mg(2+). 332 to 334 (ESQ) is a binding site for substrate. The ATP site is built by aspartate 520 and glycine 557. Position 558 (asparagine 558) interacts with Mg(2+). Serine 560 provides a ligand contact to substrate.

This sequence belongs to the FGAMS family. Monomer. Part of the FGAM synthase complex composed of 1 PurL, 1 PurQ and 2 PurS subunits.

It is found in the cytoplasm. It carries out the reaction N(2)-formyl-N(1)-(5-phospho-beta-D-ribosyl)glycinamide + L-glutamine + ATP + H2O = 2-formamido-N(1)-(5-O-phospho-beta-D-ribosyl)acetamidine + L-glutamate + ADP + phosphate + H(+). It functions in the pathway purine metabolism; IMP biosynthesis via de novo pathway; 5-amino-1-(5-phospho-D-ribosyl)imidazole from N(2)-formyl-N(1)-(5-phospho-D-ribosyl)glycinamide: step 1/2. Part of the phosphoribosylformylglycinamidine synthase complex involved in the purines biosynthetic pathway. Catalyzes the ATP-dependent conversion of formylglycinamide ribonucleotide (FGAR) and glutamine to yield formylglycinamidine ribonucleotide (FGAM) and glutamate. The FGAM synthase complex is composed of three subunits. PurQ produces an ammonia molecule by converting glutamine to glutamate. PurL transfers the ammonia molecule to FGAR to form FGAM in an ATP-dependent manner. PurS interacts with PurQ and PurL and is thought to assist in the transfer of the ammonia molecule from PurQ to PurL. In Thermoplasma acidophilum (strain ATCC 25905 / DSM 1728 / JCM 9062 / NBRC 15155 / AMRC-C165), this protein is Phosphoribosylformylglycinamidine synthase subunit PurL.